We begin with the raw amino-acid sequence, 362 residues long: Oryzain gamma chain (362 aa).

The N-terminal stretch at 1 to 24 (MAHRRIILLLAAAAVAATSAVAAA) is a signal peptide. Positions 25 to 144 (SSGFDDSNPI…GNHRMRDAAA (120 aa)) are cleaved as a propeptide — activation peptide. The N-linked (GlcNAc...) asparagine glycan is linked to Asn128. 2 cysteine pairs are disulfide-bonded: Cys166–Cys209 and Cys200–Cys242. Cys169 is an active-site residue. The N-linked (GlcNAc...) asparagine glycan is linked to Asn258. A disulfide bond links Cys300 and Cys350. Catalysis depends on residues His309 and Asn329.

Belongs to the peptidase C1 family. As to expression, expressed only in seeds.

This chain is Oryzain gamma chain, found in Oryza sativa subsp. japonica (Rice).